Consider the following 301-residue polypeptide: MAIFNHLPSSVLQCLAIFLSIIIEALPFILLGAILSGFIEVYLTPDIVQKYLPKNKIGRILFGTFVGFIFPSCECGIVPIVNRFLEKKVPSYTAIPFLATAPIINPIVLFATFSAFGNSWRFVFLRLFGAIIVAISLGILLGFIVDEHIIKESAKPCHFHDYSHKKAYQKIFYALAHAVDELFDTGRYLIFGSFVAASMQIYVPTRILTSIGHNPLTAILIMMLLAFILSLCSEADAFIGTSLLATFGVAPVVAFLLIGPMVDIKNLMMMKNAFKTKFILQFVGTSSLIIIIYCLIVGVMQ.

Helical transmembrane passes span 15-35 (LAIF…GAIL), 60-80 (ILFG…IVPI), 97-117 (FLAT…SAFG), 124-144 (FLRL…LGFI), 188-208 (YLIF…TRIL), 211-231 (IGHN…ILSL), 238-258 (FIGT…FLLI), and 278-298 (FILQ…LIVG).

The protein belongs to the UPF0718 family. Interacts with SMU_746c.

Its subcellular location is the cell membrane. Functionally, could be part of a two-component membrane permease system responsible for amino acid transport under low pH. Involved in acidogenesis, biofilm formation and low-pH survival. This chain is Putative two-component membrane permease complex subunit SMU_747c, found in Streptococcus mutans serotype c (strain ATCC 700610 / UA159).